We begin with the raw amino-acid sequence, 376 residues long: Putative aryl-alcohol dehydrogenase AAD14 (376 aa).

Y76 (proton donor) is an active-site residue. H151 is a substrate binding site. 236–246 (DVMGGGRFQSK) contacts NADP(+).

The protein belongs to the aldo/keto reductase family. Aldo/keto reductase 2 subfamily.

In Saccharomyces cerevisiae (strain ATCC 204508 / S288c) (Baker's yeast), this protein is Putative aryl-alcohol dehydrogenase AAD14 (AAD14).